A 341-amino-acid chain; its full sequence is 4-hydroxy-2-oxovalerate aldolase 2 (341 aa).

In terms of domain architecture, Pyruvate carboxyltransferase spans 8–260 (VTVHDMTLRD…ETGVDVAKIT (253 aa)). 16–17 (RD) provides a ligand contact to substrate. Mn(2+) is bound at residue Asp-17. The active-site Proton acceptor is His-20. Residues Ser-170 and His-199 each contribute to the substrate site. The Mn(2+) site is built by His-199 and His-201. Tyr-290 provides a ligand contact to substrate.

It belongs to the 4-hydroxy-2-oxovalerate aldolase family.

The enzyme catalyses (S)-4-hydroxy-2-oxopentanoate = acetaldehyde + pyruvate. This chain is 4-hydroxy-2-oxovalerate aldolase 2, found in Dechloromonas aromatica (strain RCB).